We begin with the raw amino-acid sequence, 217 residues long: Peptide methionine sulfoxide reductase MsrA (217 aa).

Cys56 is an active-site residue.

This sequence belongs to the MsrA Met sulfoxide reductase family.

The enzyme catalyses L-methionyl-[protein] + [thioredoxin]-disulfide + H2O = L-methionyl-(S)-S-oxide-[protein] + [thioredoxin]-dithiol. The catalysed reaction is [thioredoxin]-disulfide + L-methionine + H2O = L-methionine (S)-S-oxide + [thioredoxin]-dithiol. Has an important function as a repair enzyme for proteins that have been inactivated by oxidation. Catalyzes the reversible oxidation-reduction of methionine sulfoxide in proteins to methionine. In Rippkaea orientalis (strain PCC 8801 / RF-1) (Cyanothece sp. (strain PCC 8801)), this protein is Peptide methionine sulfoxide reductase MsrA.